Here is a 1407-residue protein sequence, read N- to C-terminus: DNA-directed RNA polymerase subunit beta' (1407 aa).

The Zn(2+) site is built by Cys70, Cys72, Cys85, and Cys88. Positions 460, 462, and 464 each coordinate Mg(2+). Zn(2+) contacts are provided by Cys814, Cys888, Cys895, and Cys898. N6-acetyllysine is present on Lys972.

The protein belongs to the RNA polymerase beta' chain family. In terms of assembly, the RNAP catalytic core consists of 2 alpha, 1 beta, 1 beta' and 1 omega subunit. When a sigma factor is associated with the core the holoenzyme is formed, which can initiate transcription. Mg(2+) is required as a cofactor. It depends on Zn(2+) as a cofactor.

It catalyses the reaction RNA(n) + a ribonucleoside 5'-triphosphate = RNA(n+1) + diphosphate. DNA-dependent RNA polymerase catalyzes the transcription of DNA into RNA using the four ribonucleoside triphosphates as substrates. In Escherichia coli O1:K1 / APEC, this protein is DNA-directed RNA polymerase subunit beta'.